The chain runs to 382 residues: Guanine nucleotide-binding protein G(s) subunit alpha (382 aa).

Polar residues predominate over residues 1 to 14 (MGCFGSPTSKQSDV). The interval 1–31 (MGCFGSPTSKQSDVNSEDSKSQKRRSDAISR) is disordered. Gly-2 is lipidated: N-palmitoyl glycine. Cys-3 carries S-palmitoyl cysteine lipidation. The span at 17-31 (EDSKSQKRRSDAISR) shows a compositional bias: basic and acidic residues. In terms of domain architecture, G-alpha spans 42–382 (ATHRLLLLGA…RMHLRQYELL (341 aa)). The interval 45-58 (RLLLLGAGESGKST) is G1 motif. Residues 50-57 (GAGESGKS), 51-58 (AGESGKST), 186-192 (LRCRVLT), 211-215 (DVGGQ), 212-216 (VGGQR), 280-283 (NKQD), 281-284 (KQDL), and Ala-354 each bind GTP. Mg(2+) contacts are provided by Ser-57 and Thr-192. The tract at residues 184-192 (DILRCRVLT) is G2 motif. The G3 motif stretch occupies residues 207–216 (FHMFDVGGQR). The G4 motif stretch occupies residues 276–283 (ILFLNKQD). Residues 352-357 (TCAVDT) are G5 motif.

The protein belongs to the G-alpha family. G(s) subfamily. As to quaternary structure, g proteins are composed of 3 units; alpha, beta and gamma. The alpha chain contains the guanine nucleotide binding site.

In terms of biological role, guanine nucleotide-binding proteins (G proteins) are involved as modulators or transducers in various transmembrane signaling systems. The G(s) protein is involved in hormonal regulation of adenylate cyclase: it activates the cyclase. The sequence is that of Guanine nucleotide-binding protein G(s) subunit alpha (G-salpha60A) from Drosophila pseudoobscura pseudoobscura (Fruit fly).